Reading from the N-terminus, the 215-residue chain is UPF0323 lipoprotein HP_0232 (215 aa).

Positions Met-1–Gly-27 are cleaved as a signal peptide. A lipid anchor (N-palmitoyl cysteine) is attached at Cys-28. Cys-28 carries the S-diacylglycerol cysteine lipid modification. The segment covering Gln-158–Arg-169 has biased composition (polar residues). The interval Gln-158–Ser-215 is disordered. A compositionally biased stretch (low complexity) spans Ser-170 to Ser-208.

Belongs to the UPF0323 family.

The protein localises to the cell membrane. This is UPF0323 lipoprotein HP_0232 from Helicobacter pylori (strain ATCC 700392 / 26695) (Campylobacter pylori).